We begin with the raw amino-acid sequence, 643 residues long: Phosphomethylpyrimidine synthase (643 aa).

Substrate is bound by residues asparagine 248, methionine 277, tyrosine 306, histidine 342, 362 to 364 (SRG), 403 to 406 (DGLR), and glutamate 442. Histidine 446 contacts Zn(2+). Tyrosine 469 is a substrate binding site. Histidine 510 serves as a coordination point for Zn(2+). Residues cysteine 590, cysteine 593, and cysteine 598 each coordinate [4Fe-4S] cluster.

The protein belongs to the ThiC family. As to quaternary structure, homodimer. [4Fe-4S] cluster serves as cofactor.

The catalysed reaction is 5-amino-1-(5-phospho-beta-D-ribosyl)imidazole + S-adenosyl-L-methionine = 4-amino-2-methyl-5-(phosphooxymethyl)pyrimidine + CO + 5'-deoxyadenosine + formate + L-methionine + 3 H(+). Its pathway is cofactor biosynthesis; thiamine diphosphate biosynthesis. Its function is as follows. Catalyzes the synthesis of the hydroxymethylpyrimidine phosphate (HMP-P) moiety of thiamine from aminoimidazole ribotide (AIR) in a radical S-adenosyl-L-methionine (SAM)-dependent reaction. This chain is Phosphomethylpyrimidine synthase, found in Burkholderia ambifaria (strain ATCC BAA-244 / DSM 16087 / CCUG 44356 / LMG 19182 / AMMD) (Burkholderia cepacia (strain AMMD)).